The primary structure comprises 374 residues: tRNA (guanine(26)-N(2))-dimethyltransferase (374 aa).

In terms of domain architecture, Trm1 methyltransferase spans 4–371 (IEIREGKASL…KEIDEIVNCI (368 aa)). S-adenosyl-L-methionine contacts are provided by Arg44, Arg69, Asp87, Asp113, and Ala114. 4 residues coordinate Zn(2+): Cys244, Cys247, Cys261, and Cys264.

It belongs to the class I-like SAM-binding methyltransferase superfamily. Trm1 family.

It carries out the reaction guanosine(26) in tRNA + 2 S-adenosyl-L-methionine = N(2)-dimethylguanosine(26) in tRNA + 2 S-adenosyl-L-homocysteine + 2 H(+). Dimethylates a single guanine residue at position 26 of a number of tRNAs using S-adenosyl-L-methionine as donor of the methyl groups. In Sulfurisphaera tokodaii (strain DSM 16993 / JCM 10545 / NBRC 100140 / 7) (Sulfolobus tokodaii), this protein is tRNA (guanine(26)-N(2))-dimethyltransferase.